The sequence spans 348 residues: D-alanine--D-alanine ligase (348 aa).

Residues Lys132 to Arg334 enclose the ATP-grasp domain. Glu162 to Glu217 contributes to the ATP binding site. Mg(2+) contacts are provided by Asp288, Glu301, and Asn303.

This sequence belongs to the D-alanine--D-alanine ligase family. Mg(2+) serves as cofactor. The cofactor is Mn(2+).

It localises to the cytoplasm. The enzyme catalyses 2 D-alanine + ATP = D-alanyl-D-alanine + ADP + phosphate + H(+). Its pathway is cell wall biogenesis; peptidoglycan biosynthesis. Its function is as follows. Cell wall formation. This Streptococcus equi subsp. equi (strain 4047) protein is D-alanine--D-alanine ligase.